The chain runs to 96 residues: Methanol dehydrogenase [cytochrome c] subunit 2 (96 aa).

A signal peptide spans 1-22 (MKTTLIAAAIVALSGLAAPALA). An intrachain disulfide couples cysteine 28 to cysteine 34. A disordered region spans residues 45-75 (IAGSKYDPKHDPKELNKQADSIKQMEERNKK). Basic and acidic residues predominate over residues 50–61 (YDPKHDPKELNK).

Belongs to the methanol dehydrogenase subunit 2 family. As to quaternary structure, heterotetramer composed of 2 alpha and 2 beta subunits.

It is found in the periplasm. The catalysed reaction is 2 Fe(III)-[cytochrome cL] + a primary alcohol = 2 Fe(II)-[cytochrome cL] + an aldehyde + 2 H(+). Functionally, catalyzes the oxidation of primary alcohols including methanol. The chain is Methanol dehydrogenase [cytochrome c] subunit 2 (moxI) from Methylorubrum extorquens (strain ATCC 14718 / DSM 1338 / JCM 2805 / NCIMB 9133 / AM1) (Methylobacterium extorquens).